A 300-amino-acid chain; its full sequence is Ribosomal protein L11 methyltransferase (300 aa).

Thr147, Gly168, Asp190, and Asn236 together coordinate S-adenosyl-L-methionine.

Belongs to the methyltransferase superfamily. PrmA family.

Its subcellular location is the cytoplasm. It carries out the reaction L-lysyl-[protein] + 3 S-adenosyl-L-methionine = N(6),N(6),N(6)-trimethyl-L-lysyl-[protein] + 3 S-adenosyl-L-homocysteine + 3 H(+). In terms of biological role, methylates ribosomal protein L11. In Leptospira borgpetersenii serovar Hardjo-bovis (strain JB197), this protein is Ribosomal protein L11 methyltransferase.